An 88-amino-acid chain; its full sequence is Small ribosomal subunit protein bS16 (88 aa).

The protein belongs to the bacterial ribosomal protein bS16 family.

The polypeptide is Small ribosomal subunit protein bS16 (Geotalea daltonii (strain DSM 22248 / JCM 15807 / FRC-32) (Geobacter daltonii)).